The sequence spans 337 residues: GTPase Obg (337 aa).

The Obg domain maps to 1–158 (MFVDRVIIEL…HHIELELKLI (158 aa)). The OBG-type G domain maps to 159–330 (ADVGLVGFPN…LIEKMTQRLS (172 aa)). GTP is bound by residues 165 to 172 (GFPNAGKS), 190 to 194 (FTTLQ), 212 to 215 (DIPG), 282 to 285 (NKID), and 311 to 313 (SAV). Positions 172 and 192 each coordinate Mg(2+).

Belongs to the TRAFAC class OBG-HflX-like GTPase superfamily. OBG GTPase family. In terms of assembly, monomer. The cofactor is Mg(2+).

The protein resides in the cytoplasm. In terms of biological role, an essential GTPase which binds GTP, GDP and possibly (p)ppGpp with moderate affinity, with high nucleotide exchange rates and a fairly low GTP hydrolysis rate. Plays a role in control of the cell cycle, stress response, ribosome biogenesis and in those bacteria that undergo differentiation, in morphogenesis control. The chain is GTPase Obg from Protochlamydia amoebophila (strain UWE25).